Here is a 373-residue protein sequence, read N- to C-terminus: Putative C-P lyase subunit protein HtxH (373 aa).

The protein belongs to the PhnI family.

Functionally, belongs to an operon involved in hypophosphite oxidation. Exact function not known. This Stutzerimonas stutzeri (Pseudomonas stutzeri) protein is Putative C-P lyase subunit protein HtxH (htxH).